The sequence spans 508 residues: MKLAYWMYAGPAHIGTLRIASSFKNVHGIMHAPLGDDYFNVMRSMLERERDFTPVTASIVDRHVLARGSQEKVVDNIIRKDTEEHPDLIVLTPTCTSSILQEDLQNFVRRASLSTTADVLLADVNHYRVNELQAADRTLEQIVQFYIDKARRQGTLGTSKTPTPSVNIIGITTLGFHNQHDCRELKQLMADLGIQVNLVIPAAATVHDLQRLPQAWFNLVPYREIGGLTAQYLEREFGQPSVRITPMGVVETARCIRAIQGVLNAQGAGVNYEAFIEQQTREVSQAAWFSRSIDCQNLTGKKAVVFGDNTHAAAMTKILSREMGIHVVWAGTYCKYDADWFRAEVAGFCDEVLITDDHTVVGDAIARVEPAAIFGTQMERHVGKRLNIPCGVIAAPIHIQDFPVGYRPFLGYEGTNQLVDLIYNSFTLGMEDHLLEIFGGHDTKAVIHKGLSADSDLTWTAAGLAELNKIPGFVRGKVKRNTEKFAREQGISEITVEVLYAAKEAVGA.

[4Fe-4S] cluster is bound at residue D36. D294 serves as the catalytic Proton donor. Residue 429-430 (GM) coordinates substrate.

The protein belongs to the ChlB/BchB/BchZ family. In terms of assembly, protochlorophyllide reductase is composed of three subunits; ChlL, ChlN and ChlB. Forms a heterotetramer of two ChlB and two ChlN subunits. The cofactor is [4Fe-4S] cluster.

The catalysed reaction is chlorophyllide a + oxidized 2[4Fe-4S]-[ferredoxin] + 2 ADP + 2 phosphate = protochlorophyllide a + reduced 2[4Fe-4S]-[ferredoxin] + 2 ATP + 2 H2O. It participates in porphyrin-containing compound metabolism; chlorophyll biosynthesis (light-independent). Component of the dark-operative protochlorophyllide reductase (DPOR) that uses Mg-ATP and reduced ferredoxin to reduce ring D of protochlorophyllide (Pchlide) to form chlorophyllide a (Chlide). This reaction is light-independent. The NB-protein (ChlN-ChlB) is the catalytic component of the complex. This is Light-independent protochlorophyllide reductase subunit B from Thermosynechococcus vestitus (strain NIES-2133 / IAM M-273 / BP-1).